The following is a 127-amino-acid chain: Methylglyoxal synthase (127 aa).

Residues 1–127 form the MGS-like domain; it reads MEGQRCIALI…ENLIDFNSAD (127 aa). Residues His12, Lys16, 38–41, and 59–60 each bind substrate; these read TGTT and SG. The Proton donor/acceptor role is filled by Asp65. His92 serves as a coordination point for substrate.

Belongs to the methylglyoxal synthase family.

The catalysed reaction is dihydroxyacetone phosphate = methylglyoxal + phosphate. Functionally, catalyzes the formation of methylglyoxal from dihydroxyacetone phosphate. The chain is Methylglyoxal synthase from Agrobacterium fabrum (strain C58 / ATCC 33970) (Agrobacterium tumefaciens (strain C58)).